The following is a 144-amino-acid chain: Granulocyte-macrophage colony-stimulating factor (144 aa).

A signal peptide spans Met1–Ser17. A glycan (O-linked (GalNAc...) serine) is linked at Ser24. The O-linked (GalNAc...) threonine glycan is linked to Thr27. N-linked (GlcNAc...) asparagine glycosylation is found at Asn44, Asn47, and Asn54. Intrachain disulfides connect Cys71–Cys113 and Cys105–Cys138.

The protein belongs to the GM-CSF family. As to quaternary structure, monomer. The signaling GM-CSF receptor complex is a dodecamer of two head-to-head hexamers of two alpha, two beta, and two ligand subunits.

Its subcellular location is the secreted. Cytokine that stimulates the growth and differentiation of hematopoietic precursor cells from various lineages, including granulocytes, macrophages, eosinophils and erythrocytes. This is Granulocyte-macrophage colony-stimulating factor (CSF2) from Sus scrofa (Pig).